The sequence spans 478 residues: Metalloendopeptidase OMA1, mitochondrial (478 aa).

A stress-sensor region region spans residues 134–164 (LGRSIRKWWVALPANKKQLFREWSWRRRWHF). A helical transmembrane segment spans residues 163–183 (HFLGAGTGLLFIASLFFFTHL). Histidine 296 contacts Zn(2+). The active site involves glutamate 297. Zn(2+)-binding residues include histidine 300 and glutamate 361. A disulfide bond links cysteine 376 and cysteine 434.

Belongs to the peptidase M48 family. In terms of assembly, homooligomer. The cofactor is Zn(2+). Post-translationally, autocatalytically cleaved in response to mitochondrial depolarization both at the N-terminus and C-terminus to generate the short active form (S-OMA1). The S-OMA1 form is unstable. In terms of processing, may form a redox-dependent disulfide bond. Exists in a semi-oxidized state and is activated by prolonged hypoxia.

The protein localises to the mitochondrion inner membrane. With respect to regulation, protease activity is activated upon autocatalytic cleavage in response to mitochondrial depolarization. Its function is as follows. Metalloprotease that is part of the quality control system in the inner membrane of mitochondria. Activated in response to various mitochondrial stress, leading to the proteolytic cleavage of target proteins, such as opa1 and dele1. Involved in the fusion of the mitochondrial inner membranes by mediating cleavage of opa1 at S1 position, generating the soluble opa1 (S-opa1), which cooperates with the membrane form (L-opa1) to coordinate the fusion of mitochondrial inner membranes. Following stress conditions that induce loss of mitochondrial membrane potential, mediates cleavage of opa1, leading to excess production of soluble opa1 (S-opa1) and negative regulation of mitochondrial fusion. Also acts as an activator of the integrated stress response (ISR): in response to mitochondrial stress, mediates cleavage of dele1 to generate the processed form of dele1 (S-DELE1), which translocates to the cytosol and activates eif2ak1/hri to trigger the ISR. Required for the stability of the respiratory supercomplexes. The chain is Metalloendopeptidase OMA1, mitochondrial from Danio rerio (Zebrafish).